We begin with the raw amino-acid sequence, 207 residues long: 3-demethoxyubiquinol 3-hydroxylase (207 aa).

The span at 22 to 32 (ERANPADRLAP) shows a compositional bias: basic and acidic residues. Residues 22 to 41 (ERANPADRLAPETEQMNPEE) are disordered. 6 residues coordinate Fe cation: E56, E86, H89, E138, E170, and H173.

This sequence belongs to the COQ7 family. Requires Fe cation as cofactor.

It localises to the cell membrane. It catalyses the reaction a 5-methoxy-2-methyl-3-(all-trans-polyprenyl)benzene-1,4-diol + AH2 + O2 = a 3-demethylubiquinol + A + H2O. It participates in cofactor biosynthesis; ubiquinone biosynthesis. Its function is as follows. Catalyzes the hydroxylation of 2-nonaprenyl-3-methyl-6-methoxy-1,4-benzoquinol during ubiquinone biosynthesis. The protein is 3-demethoxyubiquinol 3-hydroxylase of Cupriavidus metallidurans (strain ATCC 43123 / DSM 2839 / NBRC 102507 / CH34) (Ralstonia metallidurans).